The primary structure comprises 267 residues: Thiamine thiazole synthase (267 aa).

Residues Ser41, 60-61 (ER), Gly68, Val132, and 160-162 (HVD) each bind NAD(+). Fe cation contacts are provided by Asp162 and His177. Met227 is a binding site for NAD(+). A glycine-binding site is contributed by Arg237.

The protein belongs to the THI4 family. In terms of assembly, homooctamer; tetramer of dimers. Requires Fe(2+) as cofactor.

It carries out the reaction hydrogen sulfide + glycine + NAD(+) = ADP-5-ethyl-4-methylthiazole-2-carboxylate + nicotinamide + 3 H2O + H(+). The protein operates within cofactor biosynthesis; thiamine diphosphate biosynthesis. In terms of biological role, involved in the biosynthesis of the thiazole moiety of thiamine. Catalyzes the conversion of NAD and glycine to adenosine diphosphate 5-(2-hydroxyethyl)-4-methylthiazole-2-carboxylate (ADT), an adenylated thiazole intermediate, using free sulfide as a source of sulfur. This chain is Thiamine thiazole synthase, found in Saccharolobus islandicus (strain M.14.25 / Kamchatka #1) (Sulfolobus islandicus).